The chain runs to 329 residues: MQGSVTEFLKPHLVDIEQVSPTHAKVILEPLERGFGHTLGNALRRILLSSMPGCAVTEVEIDGVLHEYSSKEGVQEDILEVLLNLKGLAVKVQNKDDVFLTLNKSGIGPVVAADITHDGDVEIVNPEHVICHLTDENASINMRIRVQRGRGYVPASARVHAQDEERPIGRLLVDACYSPVDRIAYNVEAARVEQRTDLDKLVIELETNGAIDPEEAIRRAATILAEQLDAFVDLRDVRQPEVKEEKPEFDPILLRPVDDLELTVRSANCLKAETIHYIGDLVQRTEVELLKTPNLGKKSLTEIKDVLASRGLSLGMRLENWPPASIAED.

An alpha N-terminal domain (alpha-NTD) region spans residues 1 to 235 (MQGSVTEFLK…EQLDAFVDLR (235 aa)). Residues 249-329 (FDPILLRPVD…NWPPASIAED (81 aa)) form an alpha C-terminal domain (alpha-CTD) region.

It belongs to the RNA polymerase alpha chain family. Homodimer. The RNAP catalytic core consists of 2 alpha, 1 beta, 1 beta' and 1 omega subunit. When a sigma factor is associated with the core the holoenzyme is formed, which can initiate transcription.

The enzyme catalyses RNA(n) + a ribonucleoside 5'-triphosphate = RNA(n+1) + diphosphate. Its function is as follows. DNA-dependent RNA polymerase catalyzes the transcription of DNA into RNA using the four ribonucleoside triphosphates as substrates. This chain is DNA-directed RNA polymerase subunit alpha, found in Mannheimia succiniciproducens (strain KCTC 0769BP / MBEL55E).